We begin with the raw amino-acid sequence, 208 residues long: Urease accessory protein UreE (208 aa).

Positions 145-195 are disordered; that stretch reads AEAHGHGQAHAHDHHDHDHHDHGHDHAHHDHAHHDHAHDHHGHDHAHDHAH.

This sequence belongs to the UreE family.

It is found in the cytoplasm. In terms of biological role, involved in urease metallocenter assembly. Binds nickel. Probably functions as a nickel donor during metallocenter assembly. This is Urease accessory protein UreE from Azorhizobium caulinodans (strain ATCC 43989 / DSM 5975 / JCM 20966 / LMG 6465 / NBRC 14845 / NCIMB 13405 / ORS 571).